A 90-amino-acid polypeptide reads, in one-letter code: Co-chaperonin GroES (90 aa).

It belongs to the GroES chaperonin family. Heptamer of 7 subunits arranged in a ring. Interacts with the chaperonin GroEL.

The protein resides in the cytoplasm. Together with the chaperonin GroEL, plays an essential role in assisting protein folding. The GroEL-GroES system forms a nano-cage that allows encapsulation of the non-native substrate proteins and provides a physical environment optimized to promote and accelerate protein folding. GroES binds to the apical surface of the GroEL ring, thereby capping the opening of the GroEL channel. The protein is Co-chaperonin GroES of Helicobacter hepaticus (strain ATCC 51449 / 3B1).